The following is a 506-amino-acid chain: Maturase K (506 aa).

It belongs to the intron maturase 2 family. MatK subfamily.

The protein resides in the plastid. Its subcellular location is the chloroplast. Functionally, usually encoded in the trnK tRNA gene intron. Probably assists in splicing its own and other chloroplast group II introns. This Wisteria frutescens (American wisteria) protein is Maturase K.